The sequence spans 390 residues: Chorismate synthase 2 (390 aa).

2 residues coordinate NADP(+): Arg-39 and Arg-45. FMN contacts are provided by residues 132 to 134 (RSS), 253 to 254 (NA), Gly-298, 313 to 317 (KPIPT), and Arg-339.

It belongs to the chorismate synthase family. Homotetramer. FMNH2 is required as a cofactor.

It catalyses the reaction 5-O-(1-carboxyvinyl)-3-phosphoshikimate = chorismate + phosphate. It functions in the pathway metabolic intermediate biosynthesis; chorismate biosynthesis; chorismate from D-erythrose 4-phosphate and phosphoenolpyruvate: step 7/7. Functionally, catalyzes the anti-1,4-elimination of the C-3 phosphate and the C-6 proR hydrogen from 5-enolpyruvylshikimate-3-phosphate (EPSP) to yield chorismate, which is the branch point compound that serves as the starting substrate for the three terminal pathways of aromatic amino acid biosynthesis. This reaction introduces a second double bond into the aromatic ring system. The chain is Chorismate synthase 2 from Bacillus cereus (strain ATCC 10987 / NRS 248).